Reading from the N-terminus, the 636-residue chain is MVQASSHAEGGHEGKQGASRSVGLLVAAVGVVYGDIGTSPLYTLKEVFTGGYGVSVNHDGVLGILSLILWSLLWVVSFKYVMFILRADNQGEGGTMALTALARRATAAYPRLRTLMVICGLIGASLFYGDSMITPAVSVLSAVEGMGLAFDGIDHWVVPISLVVLVALFLVQQHGTEKIGKLFGPIMVTWFVALGALGVHGISQSPEVLKAFNPGWAVNFFVVHPGIGVAILGAVVLALTGAEALYADMGHFGRKPIARAWFILVLPALVLNYFGQGALLLQNPEAARNPFYLLAPGWALLPLVGLATMATVIASQAVISGAFSLTRQAIQLGYIPRMQIQHTSSDEQGQIYIGAVNWTLMVGVVLLVIGFGSSGALAAAYGVAVTGTMLMTTILVSAVMLLLWKWPPLLAVPILVGFLFVDGLFFAANVPKIVQGGAFPVLAGGVLYLLMSTWKRGKQILVERIDEGALPLPLFISSIRIQPPHRVEGTAVFLTARSDAVPHALLHNMLHNQVLHSQVVLLTVVSEDRPRVPEHERFEVEAYGDGFFRVLLHFGFMDEPDVPAALKLCHLDDLDFTPMRTTYFLSRETVIASRLEGMSRWRGNLFAFLLKNANGNLRFFNLPLNRVIELGTQVEI.

12 helical membrane-spanning segments follow: residues 22 to 42 (VGLL…SPLY), 64 to 84 (ILSL…VMFI), 115 to 135 (LMVI…MITP), 150 to 170 (FDGI…ALFL), 182 to 202 (LFGP…VHGI), 220 to 240 (FFVV…LALT), 261 to 281 (WFIL…ALLL), 293 to 313 (LLAP…ATVI), 351 to 371 (IYIG…VIGF), 383 to 403 (VAVT…MLLL), 408 to 428 (PLLA…FFAA), and 433 to 453 (IVQG…LMST).

This sequence belongs to the HAK/KUP transporter (TC 2.A.72) family.

It localises to the cell inner membrane. The catalysed reaction is K(+)(in) + H(+)(in) = K(+)(out) + H(+)(out). Functionally, transport of potassium into the cell. Likely operates as a K(+):H(+) symporter. The polypeptide is Probable potassium transport system protein Kup (Pseudomonas putida (strain ATCC 700007 / DSM 6899 / JCM 31910 / BCRC 17059 / LMG 24140 / F1)).